The following is a 238-amino-acid chain: tRNA (guanine-N(7)-)-methyltransferase (238 aa).

S-adenosyl-L-methionine-binding residues include glutamate 68, glutamate 93, aspartate 120, and aspartate 143. The active site involves aspartate 143. Residues lysine 147, aspartate 179, and 216–219 (TKFE) contribute to the substrate site.

Belongs to the class I-like SAM-binding methyltransferase superfamily. TrmB family.

It catalyses the reaction guanosine(46) in tRNA + S-adenosyl-L-methionine = N(7)-methylguanosine(46) in tRNA + S-adenosyl-L-homocysteine. The protein operates within tRNA modification; N(7)-methylguanine-tRNA biosynthesis. In terms of biological role, catalyzes the formation of N(7)-methylguanine at position 46 (m7G46) in tRNA. This chain is tRNA (guanine-N(7)-)-methyltransferase, found in Aliivibrio fischeri (strain MJ11) (Vibrio fischeri).